The chain runs to 271 residues: Formamidopyrimidine-DNA glycosylase (271 aa).

Pro-2 serves as the catalytic Schiff-base intermediate with DNA. Glu-3 acts as the Proton donor in catalysis. The active-site Proton donor; for beta-elimination activity is Lys-57. DNA is bound by residues His-90, Arg-109, and Lys-151. The segment at 236–270 adopts an FPG-type zinc-finger fold; sequence HVYGRGGKTCTQCGHMLSEIKLGQRATVFCSLCQQ. Residue Arg-260 is the Proton donor; for delta-elimination activity of the active site.

Belongs to the FPG family. As to quaternary structure, monomer. Zn(2+) serves as cofactor.

The catalysed reaction is Hydrolysis of DNA containing ring-opened 7-methylguanine residues, releasing 2,6-diamino-4-hydroxy-5-(N-methyl)formamidopyrimidine.. It catalyses the reaction 2'-deoxyribonucleotide-(2'-deoxyribose 5'-phosphate)-2'-deoxyribonucleotide-DNA = a 3'-end 2'-deoxyribonucleotide-(2,3-dehydro-2,3-deoxyribose 5'-phosphate)-DNA + a 5'-end 5'-phospho-2'-deoxyribonucleoside-DNA + H(+). Functionally, involved in base excision repair of DNA damaged by oxidation or by mutagenic agents. Acts as a DNA glycosylase that recognizes and removes damaged bases. Has a preference for oxidized purines, such as 7,8-dihydro-8-oxoguanine (8-oxoG). Has AP (apurinic/apyrimidinic) lyase activity and introduces nicks in the DNA strand. Cleaves the DNA backbone by beta-delta elimination to generate a single-strand break at the site of the removed base with both 3'- and 5'-phosphates. This Shewanella pealeana (strain ATCC 700345 / ANG-SQ1) protein is Formamidopyrimidine-DNA glycosylase.